The sequence spans 1143 residues: Disease resistance protein Pik-1 (1143 aa).

The interval 1–190 (MEAAAMAVTA…PLRIMGGEMQ (190 aa)) is structured coiled coil (CC) domain. The region spanning 189-258 (MQKIVFKIPM…KVGHAELLQV (70 aa)) is the HMA domain. The tract at residues 191-264 (KIVFKIPMVD…LLQVSQVKED (74 aa)) is HMA-like domain. One can recognise an NB-ARC domain in the interval 282 to 570 (HEVKTICILG…WIAEGFVSEE (289 aa)). LRR repeat units follow at residues 681–706 (FKRLRVLDLEDNKDIQDSHLQGICEQ), 708–731 (SLRVRYLGLKGTRIRKLPQEMRKL), 732–754 (KHLEILYVGSTRISELPQEIGEL), 756–777 (HLRILDVRNTDITELPLQIREL), 778–800 (QHLHTLDVRNTPISELPPQVGKL), 802–823 (NLKIMCVRSTGVRELPKEIGEL), 824–848 (NHLQTLDVRNTRVRELPWQAGQISQ), 945–968 (MPNLQTLVLRFEALPRQPITINGT), 979–1002 (DSRLPRIAFHEDAMPNLKLLEFKF), and 1004–1027 (AGPASNDAIGITNLKSLQKVVFRC).

The protein belongs to the disease resistance NB-LRR family. As to quaternary structure, interacts with AVR-Pik through its N-terminal part containing the HMA-like domain.

In terms of biological role, disease resistance (R) protein that specifically recognizes the AVR-Pik effector avirulence protein from M.oryzae. Resistance proteins guard the plant against pathogens that contain an appropriate avirulence protein via an indirect interaction with this avirulence protein. That triggers a defense system including the hypersensitive response, which restricts the pathogen growth. Contribution of Pik-2 is required to recognize the effector avirulence protein AVR-Pik. The sequence is that of Disease resistance protein Pik-1 from Oryza sativa subsp. japonica (Rice).